Here is a 64-residue protein sequence, read N- to C-terminus: Large ribosomal subunit protein bL28 (64 aa).

The protein belongs to the bacterial ribosomal protein bL28 family.

This is Large ribosomal subunit protein bL28 from Campylobacter jejuni subsp. doylei (strain ATCC BAA-1458 / RM4099 / 269.97).